The primary structure comprises 69 residues: Brevinin-1CG1 (69 aa).

The N-terminal stretch at 1–22 (MFTMKKSLLLLFFLGTINLSLC) is a signal peptide. A propeptide spans 23–43 (EQERNAEEERRDDDEMDVEVE) (removed in mature form). Cysteine 63 and cysteine 69 form a disulfide bridge.

As to expression, expressed by the skin glands.

It localises to the secreted. Antimicrobial peptide. Active against Gram-positive bacteria R.rhodochrous X15 and B.licheniformis X39 and against Gram-negative bacterium E.coli ATCC 25922. Has antifungal activity against a slime mold isolate. Has weak hemolytic activity against human erythrocytes. The protein is Brevinin-1CG1 of Amolops chunganensis (Chungan torrent frog).